The primary structure comprises 389 residues: METMCEVKVITGTSAAAEAAKLADVDVIAAYPITPQTTCVEKLAEFVANGELDAEYIKVESEHSAMSACIGAAATGARTFTATASQGLALMHEMLFIASGMRLPIVMMVANRALSAPINIWNDHQDSIAERDSGWIQIYVEDNQETLDSIIQAYKIAENEDVLLPVMVCLDGFILTHTVEPVTIPKAERVREFLGVYEPKHAYLDPDRPITQGPVGVPDCYMETRKQIEEAMERAKKVIRDVNEEFAEWFKRKYGNGLVEAYNLDNADTVLVAMGSVCGTIKYVIDELKKEGKNVGLLRIRAFRPFPKEDVKELLKDANNIAVLDKNISLGFNKGALGIEMASILKNKKVCNYIVGLGGRDIKIDDIKTIINHVEKAEDDSTLWVGLKE.

As to quaternary structure, heterotetramer of one alpha, one beta, one delta and one gamma chain.

The catalysed reaction is 2 oxidized [2Fe-2S]-[ferredoxin] + pyruvate + CoA = 2 reduced [2Fe-2S]-[ferredoxin] + acetyl-CoA + CO2 + H(+). This Methanocaldococcus jannaschii (strain ATCC 43067 / DSM 2661 / JAL-1 / JCM 10045 / NBRC 100440) (Methanococcus jannaschii) protein is Pyruvate synthase subunit PorA (porA).